A 158-amino-acid polypeptide reads, in one-letter code: Transcriptional regulator MraZ (158 aa).

SpoVT-AbrB domains lie at 5–50 (IYET…GGVY) and 91–134 (AVEC…SQSE).

This sequence belongs to the MraZ family. As to quaternary structure, forms oligomers.

It localises to the cytoplasm. It is found in the nucleoid. In Geobacter metallireducens (strain ATCC 53774 / DSM 7210 / GS-15), this protein is Transcriptional regulator MraZ.